The primary structure comprises 231 residues: MLYGFTWDTGNGELAFAISILPMLLMGLITTLQAAFLGFFVACVLGMVFAVLRGMRTRWVAWPAAVLIEFIRDTPLIAQLFFLYYVLPEYGIIFPAFLTGALALGIQYSAYISEVYRGGIQAVDHGQREAAKSLDLPPARTFTHVILPQAIPRVIPALGNYLVSIMKDVPVLSVVTIVEMLNAAKIIGDQTFNYLVPLSMVGGIYLILTIVASALVRIVDVNLPKRGVPLR.

Transmembrane regions (helical) follow at residues 9-29 (TGNG…MGLI), 32-52 (LQAA…FAVL), 64-84 (AAVL…FFLY), 86-106 (VLPE…ALGI), 161-181 (YLVS…VEML), and 196-216 (VPLS…SALV). The ABC transmembrane type-1 domain maps to 28 to 217 (LITTLQAAFL…LTIVASALVR (190 aa)).

This sequence belongs to the binding-protein-dependent transport system permease family. HisMQ subfamily.

The protein resides in the cell inner membrane. In terms of biological role, probably part of the binding-protein-dependent transport system y4tEFGH for an amino acid. Probably responsible for the translocation of the substrate across the membrane. The polypeptide is Probable amino-acid ABC transporter permease protein y4tG (Sinorhizobium fredii (strain NBRC 101917 / NGR234)).